The chain runs to 92 residues: Small ribosomal subunit protein uS19c (92 aa).

Belongs to the universal ribosomal protein uS19 family.

It localises to the plastid. The protein localises to the chloroplast. Its function is as follows. Protein S19 forms a complex with S13 that binds strongly to the 16S ribosomal RNA. The sequence is that of Small ribosomal subunit protein uS19c from Morus indica (Mulberry).